We begin with the raw amino-acid sequence, 76 residues long: Conotoxin VnMEKL-021 (76 aa).

The N-terminal stretch at 1–19 (MQKLTILLLVAAVLMSTQA) is a signal peptide. A propeptide spanning residues 20–37 (LIKGGGEKRPKEKIKFLS) is cleaved from the precursor. 3 disulfides stabilise this stretch: Cys-51–Cys-65, Cys-58–Cys-69, and Cys-64–Cys-73.

This sequence belongs to the conotoxin O2 superfamily. Expressed by the venom duct.

It is found in the secreted. This is Conotoxin VnMEKL-021 from Conus ventricosus (Mediterranean cone).